The primary structure comprises 335 residues: Cathepsin B (335 aa).

An N-terminal signal peptide occupies residues 1–17 (MWRLLATLSCLVLLTSA). Residues 18–79 (RESLHFQPLS…QRAAFAADMI (62 aa)) constitute a propeptide, activation peptide. 6 disulfide bridges follow: Cys-93–Cys-122, Cys-105–Cys-150, Cys-141–Cys-207, Cys-142–Cys-146, Cys-179–Cys-211, and Cys-187–Cys-198. Residue Cys-108 is part of the active site. The N-linked (GlcNAc...) asparagine glycan is linked to Asn-192. At Lys-220 the chain carries N6-acetyllysine. An intrachain disulfide couples Cys-227 to Cys-331. Catalysis depends on residues His-278 and Asn-298. The propeptide occupies 333–335 (PHF).

It belongs to the peptidase C1 family. Dimer of a heavy chain and a light chain cross-linked by a disulfide bond. Interacts with SRPX2. Directly interacts with SHKBP1. In terms of tissue distribution, expressed in heart (at protein level).

The protein localises to the lysosome. It localises to the melanosome. Its subcellular location is the secreted. It is found in the extracellular space. The protein resides in the apical cell membrane. It catalyses the reaction Hydrolysis of proteins with broad specificity for peptide bonds. Preferentially cleaves -Arg-Arg-|-Xaa bonds in small molecule substrates (thus differing from cathepsin L). In addition to being an endopeptidase, shows peptidyl-dipeptidase activity, liberating C-terminal dipeptides.. Its function is as follows. Thiol protease which is believed to participate in intracellular degradation and turnover of proteins. Cleaves matrix extracellular phosphoglycoprotein MEPE. Involved in the solubilization of cross-linked TG/thyroglobulin in the thyroid follicle lumen. Has also been implicated in tumor invasion and metastasis. The polypeptide is Cathepsin B (CTSB) (Sus scrofa (Pig)).